We begin with the raw amino-acid sequence, 702 residues long: ATP-dependent zinc metalloprotease FtsH (702 aa).

Residues 1–26 (MKKRNKGLVEQTTTEKNNFSRKTAWK) are Cytoplasmic-facing. Residues 27-47 (VFWWVIILAVVIGVLAYIFSP) traverse the membrane as a helical segment. Residues 48 to 175 (RAATAVVESW…FIAPDTRARD (128 aa)) lie on the Extracellular side of the membrane. A helical membrane pass occupies residues 176 to 196 (VLNGLFGLLPIIIFVVFFLLF). The Cytoplasmic portion of the chain corresponds to 197 to 702 (WRSARGISAG…EVKPESETNS (506 aa)). 271-278 (GPPGTGKT) lines the ATP pocket. Histidine 493 provides a ligand contact to Zn(2+). Glutamate 494 is an active-site residue. Residues histidine 497 and aspartate 572 each contribute to the Zn(2+) site. Positions 682–702 (EQQAKQKLNKSEVKPESETNS) are disordered. Basic and acidic residues predominate over residues 690 to 702 (NKSEVKPESETNS).

It in the central section; belongs to the AAA ATPase family. In the C-terminal section; belongs to the peptidase M41 family. Homohexamer. Zn(2+) is required as a cofactor.

The protein localises to the cell membrane. In terms of biological role, acts as a processive, ATP-dependent zinc metallopeptidase for both cytoplasmic and membrane proteins. Plays a role in the quality control of integral membrane proteins. In Mycoplasma genitalium (strain ATCC 33530 / DSM 19775 / NCTC 10195 / G37) (Mycoplasmoides genitalium), this protein is ATP-dependent zinc metalloprotease FtsH.